The primary structure comprises 1181 residues: Poly [ADP-ribose] polymerase tankyrase (1181 aa).

18 ANK repeats span residues 56–85 (RKSTPLHFAAGYGRREVVEFLLNSGASIQA), 89–118 (GGLHPLHNCCSFGHAEVVRLLLKAGASPNT), 122–151 (WNYTPLHEAASKGKVDVCLALLQHGANHTI), 209–238 (RRSTPLHLAAGYNRIGIVEILLANGADVHA), 242–271 (GGLVPLHNACSYGHFDVTKLLIQAGANVNA), 275–304 (WAFTPLHEAASKSRVEVCSLLLSRGADPTL), 362–394 (TGDTPLHLAVVSPDGKRKQLMELLTRKGSLLNE), 398–427 (AFLTPLHLAAELLHYDAMEVLLKQGAKVNA), 431–458 (LGQTPLHRCARDEQAVRLLLSYAADTNI), 483–513 (DSETHLLEAAKAGDLDTVRRIVLNNPISVNC), 519–548 (RHSTPLHFAAGFNRVPVVQFLLEHGAEVYA), 552–581 (GGLVPLHNACSYGHYEVTELLVKHGANVNV), 585–614 (WKFTPLHEAAAKGKYDICKLLLKHGADPMK), 638–668 (RGPSALLDAAKKGNLARVQRLVTPESINCRD), 672–701 (RNSTPLHLAAGYNNFECAEYLLENGADVNA), 705–734 (GGLIPLHNASSYGHLDIAALLIKHKTVVNA), 738–767 (WGFTPLHEAAQKGRTQLCSLLLAHGADAYM), and 771–799 (EGQTPIELATADDVKCLLQDAMATSLSQQ). Disordered regions lie at residues 807–834 (SLTSSSPAPDATAAAAPGTSSSSSSAIL) and 864–886 (RISPAQGAEANGAEGSSSDDLLP). The 64-residue stretch at 889 to 952 (DTITNVSGFL…LKGIAQLRST (64 aa)) folds into the SAM domain. The PARP catalytic domain maps to 969–1174 (LPDDKEFVAV…YQIVKPDDSS (206 aa)). Zn(2+) is bound by residues Cys1091, His1094, Cys1099, and Cys1102.

This sequence belongs to the ARTD/PARP family. As to quaternary structure, interacts (via ANK repeats) with PI31.

The catalysed reaction is NAD(+) + (ADP-D-ribosyl)n-acceptor = nicotinamide + (ADP-D-ribosyl)n+1-acceptor + H(+).. It carries out the reaction L-aspartyl-[protein] + NAD(+) = 4-O-(ADP-D-ribosyl)-L-aspartyl-[protein] + nicotinamide. The enzyme catalyses L-glutamyl-[protein] + NAD(+) = 5-O-(ADP-D-ribosyl)-L-glutamyl-[protein] + nicotinamide. Its function is as follows. Stimulates proteasome activity, probably by ADP-ribosylation of PI31. Modulates 26S proteasome assembly. The sequence is that of Poly [ADP-ribose] polymerase tankyrase from Drosophila melanogaster (Fruit fly).